The sequence spans 793 residues: Pleckstrin homology domain-containing family H member 3 (793 aa).

An N-terminal signal peptide occupies residues 1 to 18 (MPLPGGLWWLLCCRRGFT). The disordered stretch occupies residues 28–62 (ELSGDGDEDEDEETFELRTPSPAGGGRGPLEVTLT). Acidic residues predominate over residues 29–41 (LSGDGDEDEDEET). S30 bears the Phosphoserine mark. Residues 95 to 199 (DIVVKGWLYR…WGVALREVIA (105 aa)) enclose the PH domain. The 163-residue stretch at 237–399 (HTSGALYAPL…PSLAEISALS (163 aa)) folds into the MyTH4 domain. An FERM domain is found at 404–754 (LLCTVHCPGA…AYLANPSPER (351 aa)). Disordered stretches follow at residues 554–586 (VPLPRLDRLLPPPAPPREDPPRPTPRPPPSAAL) and 598–622 (KRRAERARRGGAGRTAGSIAREGGG). Positions 598–608 (KRRAERARRGG) are enriched in basic residues. Omega-N-methylarginine occurs at positions 638 and 642. Over residues 750–762 (PSPERPCSSSSPP) the composition is skewed to low complexity. The interval 750-793 (PSPERPCSSSSPPCQDLPDTSPPSQRPGLDEPQGQSGCLGQLQD) is disordered. Over residues 782 to 793 (QGQSGCLGQLQD) the composition is skewed to polar residues.

This Homo sapiens (Human) protein is Pleckstrin homology domain-containing family H member 3 (PLEKHH3).